The chain runs to 428 residues: Aspartic protease 10 (428 aa).

A signal peptide spans 1–16 (MKTFIALLALLTVVSA). Residues 72-425 (YMVQISLGSP…DMKSGRLGLA (354 aa)) form the Peptidase A1 domain. The active site involves Asp-90. 2 N-linked (GlcNAc...) asparagine glycosylation sites follow: Asn-155 and Asn-191. Asp-318 is an active-site residue. The cysteines at positions 353 and 385 are disulfide-linked.

The protein belongs to the peptidase A1 family. In terms of processing, proteolytically cleaved. As to expression, synthesized in the intestine. When secreted in low heme conditions, localizes to neurons near the anterior and posterior regions of the body and in coelomocytes.

It localises to the secreted. Functionally, aspartic protease which plays a role in heme homeostasis and mediates inter-organ signaling between the intestine and extra-intestinal tissues when cellular heme levels are low. This Caenorhabditis elegans protein is Aspartic protease 10.